We begin with the raw amino-acid sequence, 203 residues long: Probable flagellin 1 (203 aa).

A propeptide spanning residues 1–11 (MGMRFLKNEKG) is cleaved from the precursor.

It belongs to the archaeal flagellin family.

It localises to the archaeal flagellum. Flagellin is the subunit protein which polymerizes to form the filaments of archaeal flagella. This chain is Probable flagellin 1 (flaB1), found in Archaeoglobus fulgidus (strain ATCC 49558 / DSM 4304 / JCM 9628 / NBRC 100126 / VC-16).